Consider the following 999-residue polypeptide: Ulvan lyase, long isoform (999 aa).

The signal sequence occupies residues 1 to 21; sequence MKCLKTLLVSTTLLTAFSLNA. Position 126–127 (126–127) interacts with substrate; it reads SH. Catalysis depends on histidine 127, which acts as the Proton donor/acceptor. Ca(2+) is bound by residues aspartate 189, aspartate 199, and lysine 201. 2 residues coordinate substrate: tyrosine 280 and arginine 297. Residues aspartate 300, aspartate 303, and tyrosine 305 each coordinate Ca(2+). Substrate is bound at residue tyrosine 361.

It belongs to the polysaccharide lyase 24 family.

Ulvan lyase involved in ulvan degradation. Ulvan is the main polysaccharide component of the Ulvales (green seaweed) cell wall. It is composed of disaccharide building blocks comprising 3-sulfated rhamnose (Rha3S) linked to D-glucuronic acid (GlcA), L-iduronic acid (IduA), or D-xylose (Xyl). Ulvan lyase catalyzes preferentially the endolytic cleavage of the glycosidic bond between Rha3S and the uronic acid GlcA, but not IduA, producing oligosaccharides that have unsaturated 4-deoxy-L-threo-hex-4-enopyranosiduronic acid (deltaUA) at the non-reducing end. The most abundant end products in the degradation of the ulvan polysaccharide were deltaUA-Rha3S disaccharides and deltaUA-Rha3S-IduA-Rha3S and deltaUA-Rha3S-Xyl-Rha3S tetrasaccharides. The sequence is that of Ulvan lyase, long isoform from Alteromonas sp. (strain LOR).